The sequence spans 493 residues: Probable fatty acyl-CoA reductase 4 (493 aa).

This sequence belongs to the fatty acyl-CoA reductase family. As to expression, expressed in the endodermal cell layer surrounding the central vasculature in roots. Expressed in the hilum region of seeds. Expressed in stamen filaments and receptacle of siliques.

The catalysed reaction is a long-chain fatty acyl-CoA + 2 NADPH + 2 H(+) = a long-chain primary fatty alcohol + 2 NADP(+) + CoA. Catalyzes the reduction of fatty acyl-CoA to fatty alcohols. Catalyzes specifically the formation of C18:0 and C20:0 fatty alcohols. Provides the fatty alcohols required for synthesis of suberin in roots, seed coat and wound-induced leaf tissue. Provides the fatty alcohols required for synthesis of alkyl hydroxycinnamates in root waxes. This is Probable fatty acyl-CoA reductase 4 from Arabidopsis thaliana (Mouse-ear cress).